The chain runs to 162 residues: Protein cornichon homolog 2 (162 aa).

Over 1 to 10 the chain is Cytoplasmic; that stretch reads MAFTFAAFCY. The helical transmembrane segment at 11–31 threads the bilayer; that stretch reads MLTLVLCASLIFFIIWHIIAF. At 32-72 the chain is on the lumenal side; the sequence is DELRTDFKNPIEQGNPSRARERVKNVERICCLLRKLVVPEY. The helical transmembrane segment at 73 to 93 threads the bilayer; the sequence is CIHGLFCLMFMCAAEWVTLGL. Over 94-138 the chain is Cytoplasmic; sequence NIPLLFYHLWRYFHRPADGSEVMFDPVSIMNVDILNYCQKEAWCK. The chain crosses the membrane as a helical span at residues 139 to 161; that stretch reads LAFYLLSFFYYLYRVGATVRYVS. Alanine 162 is a topological domain (lumenal).

The protein belongs to the cornichon family.

It localises to the membrane. Regulates the trafficking and gating properties of AMPA-selective glutamate receptors (AMPARs). This Xenopus tropicalis (Western clawed frog) protein is Protein cornichon homolog 2 (cnih2).